Consider the following 381-residue polypeptide: Alkanesulfonate monooxygenase (381 aa).

This sequence belongs to the SsuD family. In terms of assembly, homotetramer.

It carries out the reaction an alkanesulfonate + FMNH2 + O2 = an aldehyde + FMN + sulfite + H2O + 2 H(+). In terms of biological role, catalyzes the desulfonation of aliphatic sulfonates. This is Alkanesulfonate monooxygenase from Escherichia coli O17:K52:H18 (strain UMN026 / ExPEC).